The following is a 205-amino-acid chain: Protein-L-isoaspartate O-methyltransferase (205 aa).

Residue S56 is part of the active site.

It belongs to the methyltransferase superfamily. L-isoaspartyl/D-aspartyl protein methyltransferase family.

The protein resides in the cytoplasm. The catalysed reaction is [protein]-L-isoaspartate + S-adenosyl-L-methionine = [protein]-L-isoaspartate alpha-methyl ester + S-adenosyl-L-homocysteine. Functionally, catalyzes the methyl esterification of L-isoaspartyl residues in peptides and proteins that result from spontaneous decomposition of normal L-aspartyl and L-asparaginyl residues. It plays a role in the repair and/or degradation of damaged proteins. The sequence is that of Protein-L-isoaspartate O-methyltransferase from Pyrobaculum aerophilum (strain ATCC 51768 / DSM 7523 / JCM 9630 / CIP 104966 / NBRC 100827 / IM2).